The sequence spans 65 residues: MKFHLLFFILLFSITILTGKRSYPEYGSLDLRKECRMSKGHCKLQCSENEIRIAFCIRPGTHCCI.

Residues 1-19 (MKFHLLFFILLFSITILTG) form the signal peptide. Intrachain disulfides connect Cys35/Cys63, Cys42/Cys56, and Cys46/Cys64.

The protein belongs to the beta-defensin family.

It localises to the secreted. In terms of biological role, has antibacterial activity. The polypeptide is Beta-defensin 17 (Defb17) (Rattus norvegicus (Rat)).